The primary structure comprises 186 residues: MGLKADNWIRKMALERKMIEPFCEANIGKGVVSYGLSSYGYDIRVGREFKIFTNVNSTVVDPKNFVEENVVDFEGDVCIVPANSFALARTIEYFKMPDDVLAICLGKSTYARCGIIVNVTPFEPGFEGHITIEISNTTPLPAKIYANEGIAQVLFLQGDEKCDTTYKDKKGKYQAQTGITLPRILK.

107–112 (KSTYAR) contributes to the dCTP binding site. Glu133 (proton donor/acceptor) is an active-site residue. DCTP-binding residues include Gln152, Tyr166, and Gln176.

Belongs to the dCTP deaminase family. Homotrimer.

The enzyme catalyses dCTP + H2O + H(+) = dUTP + NH4(+). It participates in pyrimidine metabolism; dUMP biosynthesis; dUMP from dCTP (dUTP route): step 1/2. Functionally, catalyzes the deamination of dCTP to dUTP. The chain is dCTP deaminase from Campylobacter jejuni subsp. jejuni serotype O:6 (strain 81116 / NCTC 11828).